The primary structure comprises 730 residues: MGRRKKMVERVTALMSNPVMIRNIAIIAHIDHGKTTLSDNLLAGAGMISKDLAGRQLFMDSDEEEQERGITIDSANVSMVHEFEDEEYLINLIDTPGHVDFGGDVTRAMRAVDGAVVVIDAVEGTMPQTETVLRQALKEHVRPVLFINKVDRLINELQVDAQEMQIRLGKLIDHVNKLIKGMNEERYNQGWRVDAAEGTVAFGSALYNWAISVPMMQKTGVSFGEVFDYCRAEDMKSLGEKCPLHEAVNDMVIRFLPSPIDAQEDRVGVIWHGDLEAGIGKQMAVADATGDLAFMVTDISMDPHAGEVSTGRLFSGSLSRGMEVYVSGAAKPNRIQQVGVFMGPERLEVDKIPAGNIAAVTGLRDAIVGSTVTTLDGMSPFESIRHASEPVVTVAVEAKHMKDLPKLVEVLRQVAKEDPTLKITLDEETGEHLMAGMGELHLEVIAHRIERDKGVEISTTPPIVVYRETITGTAGPVEGKSPNRHNRFYVVVEPLEPEVRELIREGEISMRMPELERREKLIAAGLDKDEAKRIADIFESNAYFDMTKGIQHLNETMELVLEGFVEVMKAGPLSKEPCMGVKVKLMDAKLHEDAVHRGPAQVIPASRQAIQAAMLMADDTLFEPYQKVFIQTPQEQMGGATKEIQGRRGIIIDMTSEGDTTIIESKAPVSELFGFAGDIRSATEGRAMWSTEFVGFEPLPTNMITEVVSGIRERKGLKKDLPQAQDFMSM.

The region spanning 19–260 is the tr-type G domain; the sequence is VMIRNIAIIA…MVIRFLPSPI (242 aa). Residues 28–35, 94–98, and 148–151 each bind GTP; these read AHIDHGKT, DTPGH, and NKVD. Diphthamide is present on H596.

It belongs to the TRAFAC class translation factor GTPase superfamily. Classic translation factor GTPase family. EF-G/EF-2 subfamily.

It localises to the cytoplasm. Catalyzes the GTP-dependent ribosomal translocation step during translation elongation. During this step, the ribosome changes from the pre-translocational (PRE) to the post-translocational (POST) state as the newly formed A-site-bound peptidyl-tRNA and P-site-bound deacylated tRNA move to the P and E sites, respectively. Catalyzes the coordinated movement of the two tRNA molecules, the mRNA and conformational changes in the ribosome. This Methanococcoides methylutens protein is Elongation factor 2 (fusA).